Consider the following 634-residue polypeptide: tRNA uridine 5-carboxymethylaminomethyl modification enzyme MnmG (634 aa).

An FAD-binding site is contributed by 14-19 (GGGHAG). 279-293 (GPRYCPSIEDKVVRF) is a binding site for NAD(+).

Belongs to the MnmG family. In terms of assembly, homodimer. Heterotetramer of two MnmE and two MnmG subunits. Requires FAD as cofactor.

The protein resides in the cytoplasm. NAD-binding protein involved in the addition of a carboxymethylaminomethyl (cmnm) group at the wobble position (U34) of certain tRNAs, forming tRNA-cmnm(5)s(2)U34. This Xanthomonas oryzae pv. oryzae (strain KACC10331 / KXO85) protein is tRNA uridine 5-carboxymethylaminomethyl modification enzyme MnmG.